The following is a 226-amino-acid chain: Ribonuclease 3 (226 aa).

An RNase III domain is found at 6–128 (INRLQRKLGY…LIGGVFLDSD (123 aa)). Residue glutamate 41 participates in Mg(2+) binding. Aspartate 45 is a catalytic residue. Residues aspartate 114 and glutamate 117 each coordinate Mg(2+). The active site involves glutamate 117. Residues 155–225 (DPKTRLQEYL…AEQALKQLEL (71 aa)) enclose the DRBM domain.

This sequence belongs to the ribonuclease III family. As to quaternary structure, homodimer. The cofactor is Mg(2+).

It is found in the cytoplasm. The enzyme catalyses Endonucleolytic cleavage to 5'-phosphomonoester.. Digests double-stranded RNA. Involved in the processing of primary rRNA transcript to yield the immediate precursors to the large and small rRNAs (23S and 16S). Processes some mRNAs, and tRNAs when they are encoded in the rRNA operon. Processes pre-crRNA and tracrRNA of type II CRISPR loci if present in the organism. This is Ribonuclease 3 from Yersinia pseudotuberculosis serotype O:1b (strain IP 31758).